A 377-amino-acid chain; its full sequence is Adaptive-response sensory kinase SasA (377 aa).

Residues 154 to 373 (MLVHDLRSPL…SFHFTLPVYR (220 aa)) form the Histidine kinase domain. His-157 is modified (phosphohistidine; by autocatalysis).

In terms of assembly, homooligomerizes. Interacts with KaiC. Participates in the KaiABC clock complex, whose core is composed of a KaiC homohexamer, 6 KaiB and up to 6 KaiA dimers. SasA and KaiB(fs) compete to bind to KaiC.

The catalysed reaction is ATP + protein L-histidine = ADP + protein N-phospho-L-histidine.. Its function is as follows. Member of the two-component regulatory system SasA/RpaA involved in genome-wide circadian gene expression. One of several clock output pathways. Participates in the Kai clock protein complex, the main circadian regulator in cyanobacteria, via its interaction with KaiC. KaiC enhances the autophosphorylation activity of SasA, which then transfers its phosphate group to RpaA to activate it. In addition to its output function, recruits fold-shifted KaiB (KaiB(fs)) to KaiC to cooperatively form the KaiB(6):KaiC(6) complex (independent of SasA kinase activity). Required for robustness of the circadian rhythm of gene expression and is involved in clock output, also required for adaptation to light/dark cycles. This chain is Adaptive-response sensory kinase SasA, found in Synechococcus sp. (strain JA-3-3Ab) (Cyanobacteria bacterium Yellowstone A-Prime).